The primary structure comprises 393 residues: NAD(P)H-quinone oxidoreductase subunit H, chloroplastic (393 aa).

The protein belongs to the complex I 49 kDa subunit family. NDH is composed of at least 16 different subunits, 5 of which are encoded in the nucleus.

It is found in the plastid. The protein resides in the chloroplast thylakoid membrane. It carries out the reaction a plastoquinone + NADH + (n+1) H(+)(in) = a plastoquinol + NAD(+) + n H(+)(out). The catalysed reaction is a plastoquinone + NADPH + (n+1) H(+)(in) = a plastoquinol + NADP(+) + n H(+)(out). Its function is as follows. NDH shuttles electrons from NAD(P)H:plastoquinone, via FMN and iron-sulfur (Fe-S) centers, to quinones in the photosynthetic chain and possibly in a chloroplast respiratory chain. The immediate electron acceptor for the enzyme in this species is believed to be plastoquinone. Couples the redox reaction to proton translocation, and thus conserves the redox energy in a proton gradient. In Amborella trichopoda, this protein is NAD(P)H-quinone oxidoreductase subunit H, chloroplastic.